Here is a 396-residue protein sequence, read N- to C-terminus: Phosphoglycerate kinase (396 aa).

Substrate contacts are provided by residues 21–23 (DFN), arginine 36, 59–62 (HLGK), arginine 119, and arginine 156. Residues lysine 206, glycine 294, glutamate 325, and 352–355 (GGDS) contribute to the ATP site.

It belongs to the phosphoglycerate kinase family. As to quaternary structure, monomer.

It is found in the cytoplasm. It catalyses the reaction (2R)-3-phosphoglycerate + ATP = (2R)-3-phospho-glyceroyl phosphate + ADP. It participates in carbohydrate degradation; glycolysis; pyruvate from D-glyceraldehyde 3-phosphate: step 2/5. The sequence is that of Phosphoglycerate kinase from Listeria monocytogenes serovar 1/2a (strain ATCC BAA-679 / EGD-e).